Here is a 343-residue protein sequence, read N- to C-terminus: Chlorophyll(ide) b reductase NOL, chloroplastic (343 aa).

A chloroplast-targeting transit peptide spans Met1–Arg54. Ile78–Ile102 is a binding site for NAD(+). Catalysis depends on Tyr228, which acts as the Proton acceptor.

Belongs to the short-chain dehydrogenases/reductases (SDR) family. In terms of assembly, interacts with NCY1 to form a complex that acts as a chlorophyll b reductase. Expressed in leaves and stems. Also detected in non-photosynthetic tissues such as roots.

It localises to the plastid. It is found in the chloroplast thylakoid membrane. The enzyme catalyses 7(1)-hydroxychlorophyllide a + NAD(+) = chlorophyllide b + NADH + H(+). It carries out the reaction 7(1)-hydroxychlorophyllide a + NADP(+) = chlorophyllide b + NADPH + H(+). Functionally, required for chlorophyll b degradation. This is Chlorophyll(ide) b reductase NOL, chloroplastic (NOL) from Oryza sativa subsp. japonica (Rice).